Reading from the N-terminus, the 278-residue chain is Putative non-heme haloperoxidase (278 aa).

Residues 24 to 240 (PLVFLHGLSV…STAKITNASF (217 aa)) enclose the AB hydrolase-1 domain. Catalysis depends on residues Ser-97 and Asp-221.

This sequence belongs to the AB hydrolase superfamily.

This is Putative non-heme haloperoxidase (59.2) from Mycobacterium (Mycobacteriophage D29).